The sequence spans 274 residues: THAP domain-containing protein 8 (274 aa).

Residues 1 to 85 (MPKYCRAPNC…LRPDAVPSIF (85 aa)) form a THAP-type zinc finger. Positions 83–121 (SIFSRGPPAKSQRRTRSTQKPVSPPPPLQKNTPLPQSPA) are disordered.

This is THAP domain-containing protein 8 (THAP8) from Homo sapiens (Human).